Reading from the N-terminus, the 257-residue chain is NAD-capped RNA hydrolase NudC (257 aa).

Arg69 is a binding site for substrate. Zn(2+) is bound by residues Cys98 and Cys101. Glu111 is a substrate binding site. Zn(2+) is bound by residues Cys116 and Cys119. Tyr124 provides a ligand contact to substrate. The Nudix hydrolase domain maps to 125 to 248 (PQIAPCIIVA…TVARRLIEDT (124 aa)). Ala158, Glu174, and Glu178 together coordinate a divalent metal cation. The Nudix box motif lies at 159–180 (GFVEVGETLEQAVAREVMEESG). Residue 192-199 (QPWPFPQS) participates in substrate binding. Residue Glu219 participates in a divalent metal cation binding. Residue Ala241 coordinates substrate.

This sequence belongs to the Nudix hydrolase family. NudC subfamily. In terms of assembly, homodimer. Mg(2+) is required as a cofactor. It depends on Mn(2+) as a cofactor. The cofactor is Zn(2+).

The catalysed reaction is a 5'-end NAD(+)-phospho-ribonucleoside in mRNA + H2O = a 5'-end phospho-adenosine-phospho-ribonucleoside in mRNA + beta-nicotinamide D-ribonucleotide + 2 H(+). The enzyme catalyses NAD(+) + H2O = beta-nicotinamide D-ribonucleotide + AMP + 2 H(+). It catalyses the reaction NADH + H2O = reduced beta-nicotinamide D-ribonucleotide + AMP + 2 H(+). In terms of biological role, mRNA decapping enzyme that specifically removes the nicotinamide adenine dinucleotide (NAD) cap from a subset of mRNAs by hydrolyzing the diphosphate linkage to produce nicotinamide mononucleotide (NMN) and 5' monophosphate mRNA. The NAD-cap is present at the 5'-end of some mRNAs and stabilizes RNA against 5'-processing. Has preference for mRNAs with a 5'-end purine. Catalyzes the hydrolysis of a broad range of dinucleotide pyrophosphates. The protein is NAD-capped RNA hydrolase NudC of Klebsiella pneumoniae subsp. pneumoniae (strain ATCC 700721 / MGH 78578).